The sequence spans 286 residues: MVAVIIKGNEVAEKKRAQLKEKVVKLKEQGIVPGLAVILVGEDPASRSYVKGKEKGCEQVGIYSELIELPETITEERLLVEIDRLNGDDRINGILVQLPLPKHIEEKAIIERISPEKDVDGFHPISVGRMMTGQDTFLPCTPHGILELVKETNLDISGKHVVVIGRSNIVGKPVGQLFLNENATVTYCHSKTRNIKELSKLADILIVAVGRPKMVTADYIKEGAVVIDVGVNRLETGKLCGDVDFDNVLDVAGYITPVPKGVGPMTITMLLHNTVESAKRAGVVCQ.

NADP(+) contacts are provided by residues 165 to 167 (GRS), Ser190, and Val231.

Belongs to the tetrahydrofolate dehydrogenase/cyclohydrolase family. As to quaternary structure, homodimer.

It carries out the reaction (6R)-5,10-methylene-5,6,7,8-tetrahydrofolate + NADP(+) = (6R)-5,10-methenyltetrahydrofolate + NADPH. The catalysed reaction is (6R)-5,10-methenyltetrahydrofolate + H2O = (6R)-10-formyltetrahydrofolate + H(+). It functions in the pathway one-carbon metabolism; tetrahydrofolate interconversion. In terms of biological role, catalyzes the oxidation of 5,10-methylenetetrahydrofolate to 5,10-methenyltetrahydrofolate and then the hydrolysis of 5,10-methenyltetrahydrofolate to 10-formyltetrahydrofolate. The polypeptide is Bifunctional protein FolD (Bacillus mycoides (strain KBAB4) (Bacillus weihenstephanensis)).